The sequence spans 375 residues: Trichodiene synthase (375 aa).

This sequence belongs to the trichodiene synthase family.

It catalyses the reaction (2E,6E)-farnesyl diphosphate = trichodiene + diphosphate. The protein operates within sesquiterpene biosynthesis; trichothecene biosynthesis. In terms of biological role, TS is a member of the terpene cyclase group of enzymes. It catalyzes the isomerization and cyclization of farnesyl pyro-phosphate to form trichodiene, the first cyclic intermediate in the biosynthetic pathway for trichothecenes. It serves to branch trichothecene biosynthesis from the isoprenoid pathway. This is Trichodiene synthase (TRI5) from Fusarium pseudograminearum (Wheat and barley crown-rot fungus).